Reading from the N-terminus, the 127-residue chain is Fluoride-specific ion channel FluC (127 aa).

The next 4 membrane-spanning stretches (helical) occupy residues 4 to 24, 35 to 55, 71 to 91, and 103 to 123; these read LLLA…MLSM, LGTL…FAWF, TGFC…VFLL, and VLVN…IFSA. Residues G75 and T78 each coordinate Na(+).

It belongs to the fluoride channel Fluc/FEX (TC 1.A.43) family.

The protein resides in the cell inner membrane. The catalysed reaction is fluoride(in) = fluoride(out). Its activity is regulated as follows. Na(+) is not transported, but it plays an essential structural role and its presence is essential for fluoride channel function. Fluoride-specific ion channel. Important for reducing fluoride concentration in the cell, thus reducing its toxicity. The sequence is that of Fluoride-specific ion channel FluC from Escherichia fergusonii (strain ATCC 35469 / DSM 13698 / CCUG 18766 / IAM 14443 / JCM 21226 / LMG 7866 / NBRC 102419 / NCTC 12128 / CDC 0568-73).